The chain runs to 452 residues: Isocitrate dehydrogenase [NADP], mitochondrial (452 aa).

The transit peptide at 1–39 (MAGYLRVVRSLCRASGSGSAWAPAALTAPNLQEQPRRHY) directs the protein to the mitochondrion. K45, K48, K67, and K69 each carry N6-acetyllysine. 2 positions are modified to N6-acetyllysine; alternate: K80 and K106. An N6-succinyllysine; alternate mark is found at K80 and K106. NADP(+) contacts are provided by residues 115 to 117 (TIT) and R122. Position 117 (T117) interacts with D-threo-isocitrate. D-threo-isocitrate-binding positions include 134 to 140 (SPNGTIR) and R149. Position 155 is an N6-acetyllysine (K155). The residue at position 166 (K166) is an N6-acetyllysine; alternate. Residue K166 is modified to N6-succinyllysine; alternate. R172 is a D-threo-isocitrate binding site. N6-acetyllysine; alternate is present on residues K180 and K193. K180 and K193 each carry N6-succinyllysine; alternate. K199 bears the N6-acetyllysine mark. K256 bears the N6-acetyllysine; alternate mark. The residue at position 256 (K256) is an N6-succinyllysine; alternate. N6-acetyllysine occurs at positions 263, 272, 275, and 280. Residue K282 is modified to N6-acetyllysine; alternate. An N6-succinyllysine; alternate modification is found at K282. D291 provides a ligand contact to Mn(2+). K299 is a binding site for NADP(+). D314 serves as a coordination point for Mn(2+). NADP(+) is bound by residues 349 to 354 (GTVTRH) and N367. At K384 the chain carries N6-acetyllysine; alternate. Position 384 is an N6-succinyllysine; alternate (K384). Residues K400, K413, and K442 each carry the N6-acetyllysine modification.

This sequence belongs to the isocitrate and isopropylmalate dehydrogenases family. In terms of assembly, homodimer. The cofactor is Mg(2+). Mn(2+) is required as a cofactor. Acetylation at Lys-413 dramatically reduces catalytic activity. Deacetylated by SIRT3.

Its subcellular location is the mitochondrion. It carries out the reaction D-threo-isocitrate + NADP(+) = 2-oxoglutarate + CO2 + NADPH. In terms of biological role, plays a role in intermediary metabolism and energy production. It may tightly associate or interact with the pyruvate dehydrogenase complex. The polypeptide is Isocitrate dehydrogenase [NADP], mitochondrial (IDH2) (Bos taurus (Bovine)).